We begin with the raw amino-acid sequence, 280 residues long: Diaminopimelate epimerase (280 aa).

Substrate-binding residues include Asn-13 and Asn-67. Cys-76 functions as the Proton donor in the catalytic mechanism. Substrate contacts are provided by residues 77 to 78, Asn-191, and 208 to 209; these read GN and ER. Catalysis depends on Cys-218, which acts as the Proton acceptor. 219-220 is a binding site for substrate; sequence GT.

This sequence belongs to the diaminopimelate epimerase family. Homodimer.

Its subcellular location is the cytoplasm. The catalysed reaction is (2S,6S)-2,6-diaminopimelate = meso-2,6-diaminopimelate. The protein operates within amino-acid biosynthesis; L-lysine biosynthesis via DAP pathway; DL-2,6-diaminopimelate from LL-2,6-diaminopimelate: step 1/1. Its function is as follows. Catalyzes the stereoinversion of LL-2,6-diaminopimelate (L,L-DAP) to meso-diaminopimelate (meso-DAP), a precursor of L-lysine. The protein is Diaminopimelate epimerase of Archaeoglobus fulgidus (strain ATCC 49558 / DSM 4304 / JCM 9628 / NBRC 100126 / VC-16).